Here is a 532-residue protein sequence, read N- to C-terminus: Tyrosinase (532 aa).

The N-terminal stretch at 1–22 (MESTTVLLAASTLLLVLHASYG) is a signal peptide. The Lumenal, melanosome segment spans residues 23 to 479 (QFPRACSTAQ…LEQARQIWQW (457 aa)). Residues Asn-90, Asn-115, and Asn-165 are each glycosylated (N-linked (GlcNAc...) asparagine). Positions 184, 206, and 215 each coordinate Cu cation. Asn-234 and Asn-341 each carry an N-linked (GlcNAc...) asparagine glycan. Cu cation is bound by residues His-367 and His-371. Asn-375 carries N-linked (GlcNAc...) asparagine glycosylation. His-394 contributes to the Cu cation binding site. A helical transmembrane segment spans residues 480 to 500 (LLGAAVVGGLVTAVIATIISL). Topologically, residues 501–532 (TCRRKRRTKTSEETRPLLMEAEDYHATYQSNL) are cytoplasmic.

Belongs to the tyrosinase family. Active tyrosinase has been found as a homodimer and homotetramer. Cu(2+) serves as cofactor. As to expression, frog skin.

It is found in the melanosome membrane. It carries out the reaction 2 L-dopa + O2 = 2 L-dopaquinone + 2 H2O. The catalysed reaction is L-tyrosine + O2 = L-dopaquinone + H2O. Activated by trypsin, chymotrypsin and subtilisin. Activated by alpha-chymotrypsin, thermolysin and Pronase. Inhibited by its product L-DOPA and tyrosine. Its function is as follows. This is a copper-containing oxidase that functions in the formation of pigments such as melanins and other polyphenolic compounds. Catalyzes the initial and rate limiting step in the cascade of reactions leading to melanin production from tyrosine. In addition to hydroxylating tyrosine to DOPA (3,4-dihydroxyphenylalanine), also catalyzes the oxidation of DOPA to DOPA-quinone. This chain is Tyrosinase, found in Pelophylax lessonae (Pool frog).